The chain runs to 142 residues: Hemoglobin subunit alpha 1 (142 aa).

Ser-1 is modified (N-acetylserine). Residues 1 to 142 enclose the Globin domain; it reads SLSDKDKAAV…VSLALSERYR (142 aa). His-59 lines the O2 pocket. His-88 is a binding site for heme b.

The protein belongs to the globin family. In terms of assembly, hb1 is a heterotetramer of two alpha-1 chains and two beta-1 chains. Hb2 is a heterotetramer of two alpha-2 chains and two beta-1 chains. HbC is a heterotetramer of two alpha-1 chains and two beta-2 chains. As to expression, red blood cells.

In terms of biological role, involved in oxygen transport from gills to the various peripheral tissues. In Eleginops maclovinus (Patagonian blennie), this protein is Hemoglobin subunit alpha 1.